A 317-amino-acid chain; its full sequence is 17-beta-hydroxysteroid dehydrogenase type 6 (317 aa).

A signal peptide spans 1–17 (MWLYLAAFVGLYYLLHW). 33–57 (FITGCDSGFGNLLARQLDARGLRVL) contributes to the NAD(+) binding site. N-linked (GlcNAc...) asparagine glycosylation occurs at Asn161. Substrate is bound at residue Ser164. The Proton acceptor role is filled by Tyr176. Asn215 and Asn256 each carry an N-linked (GlcNAc...) asparagine glycan.

It belongs to the short-chain dehydrogenases/reductases (SDR) family. As to expression, detected in liver and prostate (at protein level). Detected in adult liver, lung, brain, placenta, prostate, adrenal gland, testis, mammary gland, spleen, spinal cord and uterus. Detected in caudate nucleus, and at lower levels in amygdala, corpus callosum, hippocampus, substantia nigra and thalamus. Detected in fetal lung, liver and brain.

The protein resides in the microsome membrane. The protein localises to the early endosome membrane. It carries out the reaction all-trans-retinol--[retinol-binding protein] + NAD(+) = all-trans-retinal--[retinol-binding protein] + NADH + H(+). The enzyme catalyses all-trans-retinol + NAD(+) = all-trans-retinal + NADH + H(+). The catalysed reaction is androsterone + NAD(+) = 5alpha-androstan-3,17-dione + NADH + H(+). It catalyses the reaction testosterone + NAD(+) = androst-4-ene-3,17-dione + NADH + H(+). It carries out the reaction 5alpha-androstane-3alpha,17beta-diol + NAD(+) = 17beta-hydroxy-5alpha-androstan-3-one + NADH + H(+). The enzyme catalyses 17beta-estradiol + NAD(+) = estrone + NADH + H(+). The catalysed reaction is 17beta-estradiol + NADP(+) = estrone + NADPH + H(+). It catalyses the reaction 3alpha-hydroxy-5alpha-pregnan-20-one + NAD(+) = 5alpha-pregnane-3,20-dione + NADH + H(+). It carries out the reaction 5alpha-androstane-3beta,17beta-diol + NAD(+) = 17beta-hydroxy-5alpha-androstan-3-one + NADH + H(+). The enzyme catalyses 3beta-hydroxy-5alpha-androstan-17-one + NAD(+) = 5alpha-androstan-3,17-dione + NADH + H(+). Functionally, NAD-dependent oxidoreductase with broad substrate specificity that shows both oxidative and reductive activity (in vitro). Has 17-beta-hydroxysteroid dehydrogenase activity towards various steroids (in vitro). Converts 5-alpha-androstan-3-alpha,17-beta-diol to androsterone and estradiol to estrone (in vitro). Has 3-alpha-hydroxysteroid dehydrogenase activity towards androsterone (in vitro). Has retinol dehydrogenase activity towards all-trans-retinol (in vitro). Can convert androsterone to epi-androsterone. Androsterone is first oxidized to 5-alpha-androstane-3,17-dione and then reduced to epi-andosterone. Can act on both C-19 and C-21 3-alpha-hydroxysteroids. This chain is 17-beta-hydroxysteroid dehydrogenase type 6 (HSD17B6), found in Homo sapiens (Human).